Reading from the N-terminus, the 161-residue chain is Regulator of ribonuclease activity A (161 aa).

Belongs to the RraA family. As to quaternary structure, homotrimer. Binds to both RNA-binding sites in the C-terminal region of Rne and to RhlB.

Its subcellular location is the cytoplasm. Globally modulates RNA abundance by binding to RNase E (Rne) and regulating its endonucleolytic activity. Can modulate Rne action in a substrate-dependent manner by altering the composition of the degradosome. Modulates RNA-binding and helicase activities of the degradosome. In Photobacterium profundum (strain SS9), this protein is Regulator of ribonuclease activity A.